Here is a 464-residue protein sequence, read N- to C-terminus: Methionine aminopeptidase 2-2 (464 aa).

A disordered region spans residues 1-106 (MGAKTYEGGD…PRVPLSQLFP (106 aa)). The segment covering 37-53 (EDGDGEFGSDDDDDGGD) has biased composition (acidic residues). Residues 70–86 (PKKKKRSKKKKNNKKKS) show a composition bias toward basic residues. A substrate-binding site is contributed by His-216. 3 residues coordinate a divalent metal cation: Asp-237, Asp-248, and His-317. His-325 is a binding site for substrate. Glu-350 and Glu-445 together coordinate a divalent metal cation.

It belongs to the peptidase M24A family. Methionine aminopeptidase eukaryotic type 2 subfamily. Co(2+) serves as cofactor. It depends on Zn(2+) as a cofactor. The cofactor is Mn(2+). Requires Fe(2+) as cofactor.

Its subcellular location is the cytoplasm. It carries out the reaction Release of N-terminal amino acids, preferentially methionine, from peptides and arylamides.. Cotranslationally removes the N-terminal methionine from nascent proteins. The N-terminal methionine is often cleaved when the second residue in the primary sequence is small and uncharged (Met-Ala-, Cys, Gly, Pro, Ser, Thr, or Val). The protein is Methionine aminopeptidase 2-2 of Talaromyces stipitatus (strain ATCC 10500 / CBS 375.48 / QM 6759 / NRRL 1006) (Penicillium stipitatum).